We begin with the raw amino-acid sequence, 228 residues long: Demethylmenaquinone methyltransferase (228 aa).

S-adenosyl-L-methionine contacts are provided by residues Thr62, Asp80, 100 to 101 (DA), and Ser117.

It belongs to the class I-like SAM-binding methyltransferase superfamily. MenG/UbiE family.

It catalyses the reaction a 2-demethylmenaquinol + S-adenosyl-L-methionine = a menaquinol + S-adenosyl-L-homocysteine + H(+). It participates in quinol/quinone metabolism; menaquinone biosynthesis; menaquinol from 1,4-dihydroxy-2-naphthoate: step 2/2. Functionally, methyltransferase required for the conversion of demethylmenaquinol (DMKH2) to menaquinol (MKH2). The chain is Demethylmenaquinone methyltransferase from Mycolicibacterium gilvum (strain PYR-GCK) (Mycobacterium gilvum (strain PYR-GCK)).